The primary structure comprises 150 residues: UPF0178 protein BamMC406_1579 (150 aa).

It belongs to the UPF0178 family.

This Burkholderia ambifaria (strain MC40-6) protein is UPF0178 protein BamMC406_1579.